A 309-amino-acid polypeptide reads, in one-letter code: tRNA pseudouridine synthase B (309 aa).

The Nucleophile role is filled by D45.

It belongs to the pseudouridine synthase TruB family. Type 1 subfamily.

It catalyses the reaction uridine(55) in tRNA = pseudouridine(55) in tRNA. Responsible for synthesis of pseudouridine from uracil-55 in the psi GC loop of transfer RNAs. In Oleidesulfovibrio alaskensis (strain ATCC BAA-1058 / DSM 17464 / G20) (Desulfovibrio alaskensis), this protein is tRNA pseudouridine synthase B.